The primary structure comprises 342 residues: N-acetyl-gamma-glutamyl-phosphate reductase (342 aa).

The active site involves Cys-146.

It belongs to the NAGSA dehydrogenase family. Type 1 subfamily.

The protein resides in the cytoplasm. It catalyses the reaction N-acetyl-L-glutamate 5-semialdehyde + phosphate + NADP(+) = N-acetyl-L-glutamyl 5-phosphate + NADPH + H(+). The protein operates within amino-acid biosynthesis; L-arginine biosynthesis; N(2)-acetyl-L-ornithine from L-glutamate: step 3/4. Functionally, catalyzes the NADPH-dependent reduction of N-acetyl-5-glutamyl phosphate to yield N-acetyl-L-glutamate 5-semialdehyde. The sequence is that of N-acetyl-gamma-glutamyl-phosphate reductase from Saccharopolyspora erythraea (strain ATCC 11635 / DSM 40517 / JCM 4748 / NBRC 13426 / NCIMB 8594 / NRRL 2338).